We begin with the raw amino-acid sequence, 340 residues long: 4-hydroxy-3-methylbut-2-enyl diphosphate reductase (340 aa).

Cysteine 19 lines the [4Fe-4S] cluster pocket. 2 residues coordinate (2E)-4-hydroxy-3-methylbut-2-enyl diphosphate: histidine 50 and histidine 90. Residues histidine 50 and histidine 90 each contribute to the dimethylallyl diphosphate site. The isopentenyl diphosphate site is built by histidine 50 and histidine 90. Cysteine 112 provides a ligand contact to [4Fe-4S] cluster. Histidine 141 is a (2E)-4-hydroxy-3-methylbut-2-enyl diphosphate binding site. Histidine 141 is a binding site for dimethylallyl diphosphate. Histidine 141 is a binding site for isopentenyl diphosphate. Glutamate 143 acts as the Proton donor in catalysis. Threonine 190 contacts (2E)-4-hydroxy-3-methylbut-2-enyl diphosphate. Position 220 (cysteine 220) interacts with [4Fe-4S] cluster. (2E)-4-hydroxy-3-methylbut-2-enyl diphosphate-binding residues include serine 248, serine 249, asparagine 250, and serine 292. Serine 248, serine 249, asparagine 250, and serine 292 together coordinate dimethylallyl diphosphate. Residues serine 248, serine 249, asparagine 250, and serine 292 each coordinate isopentenyl diphosphate.

This sequence belongs to the IspH family. The cofactor is [4Fe-4S] cluster.

The enzyme catalyses isopentenyl diphosphate + 2 oxidized [2Fe-2S]-[ferredoxin] + H2O = (2E)-4-hydroxy-3-methylbut-2-enyl diphosphate + 2 reduced [2Fe-2S]-[ferredoxin] + 2 H(+). It catalyses the reaction dimethylallyl diphosphate + 2 oxidized [2Fe-2S]-[ferredoxin] + H2O = (2E)-4-hydroxy-3-methylbut-2-enyl diphosphate + 2 reduced [2Fe-2S]-[ferredoxin] + 2 H(+). It participates in isoprenoid biosynthesis; dimethylallyl diphosphate biosynthesis; dimethylallyl diphosphate from (2E)-4-hydroxy-3-methylbutenyl diphosphate: step 1/1. It functions in the pathway isoprenoid biosynthesis; isopentenyl diphosphate biosynthesis via DXP pathway; isopentenyl diphosphate from 1-deoxy-D-xylulose 5-phosphate: step 6/6. Catalyzes the conversion of 1-hydroxy-2-methyl-2-(E)-butenyl 4-diphosphate (HMBPP) into a mixture of isopentenyl diphosphate (IPP) and dimethylallyl diphosphate (DMAPP). Acts in the terminal step of the DOXP/MEP pathway for isoprenoid precursor biosynthesis. This chain is 4-hydroxy-3-methylbut-2-enyl diphosphate reductase, found in Thermus thermophilus (strain ATCC BAA-163 / DSM 7039 / HB27).